A 131-amino-acid polypeptide reads, in one-letter code: Global transcriptional regulator Spx (131 aa).

Residues 10-13 (CTSC) carry the CXXC motif. A disulfide bridge connects residues Cys-10 and Cys-13.

This sequence belongs to the ArsC family. Spx subfamily. As to quaternary structure, interacts with the C-terminal domain of the alpha subunit of the RNAP. A single Spx monomer interacts with RNAP to form the transcription activation complex. Interacts with the adapter protein SpxH/YjbH.

The protein localises to the cytoplasm. Under non-stress conditions, Spx is degraded by ClpXP and, to a lesser extent, by ClpCP. Efficient dedradation by ClpXP requires the adapter protein SpxH/YjbH. Binding to SpxH/YjbH reduces the overall conformational flexibility of Spx and stabilizes the C-terminal ClpX recognition region of Spx. In addition, activity is modulated by the formation of a disulfide bound within the N-terminal Cys-X-X-Cys (CXXC) motif, which is required for the transcriptional activation of trxA and trxB, or for the activation of msrAB operon expression following paraquat oxidative stress. However, it seems that formation of the disulfide bound is not essential for induction of all Spx-controlled genes, as for example the case of BSH biosynthesis genes. Similarly, induction of the Spx regulon during cell wall stress is not accompanied by oxidation of the disulfide switch, but requires Spx stabilization by the anti-adapter protein SpxO/YirB. Its function is as follows. Global transcriptional regulator that plays a key role in stress response and exerts either positive or negative regulation of genes. Acts by interacting with the C-terminal domain of the alpha subunit of the RNA polymerase (RNAP). This interaction can enhance binding of RNAP to the promoter region of target genes and stimulate their transcription, or block interaction of RNAP with activator proteins and repress transcription. Exhibits no DNA-binding activity. Functionally, induces the expression of a large number of genes in response to a variety of stress conditions, such as disulfide, heat and cell wall stress, while concurrently repressing transcription of genes involved in various developmental and growth-related pathways during periods of extreme stress. Functions in the oxidative stress response via induction of the transcription of thioredoxin (trxA) and thioredoxin reductase (trxB) during thiol-specific oxidative (disulfide) stress. Mediates response to oxidative stress caused by paraquat (PQ) via induction of the methionine sulfoxide reductase genes, msrA and msrB. Also acts as a transcriptional activator of the bacillithiol (BSH) biosynthesis genes in response to oxidizing conditions and thio-reactive compounds. Involved in heat stress response and thermotolerance development, which results in diminished cellular protein aggregates. Plays an important adaptive role in the cell wall stress response. Participates in sulfate-dependent control of organosulfur metabolism. Negatively controls, via CymR, the expression of the organosulfur utilization operons ytmI, yxeI and ssu, and directly activates yrrT operon expression during growth in medium containing methionine as sole sulfur source. Negatively affects competence and sporulation. Inhibits biofilm formation in response to disulfide stress by repressing biofilm matrix genes. This chain is Global transcriptional regulator Spx, found in Bacillus subtilis (strain 168).